The following is a 455-amino-acid chain: Exodeoxyribonuclease 7 large subunit (455 aa).

Belongs to the XseA family. Heterooligomer composed of large and small subunits.

The protein resides in the cytoplasm. It catalyses the reaction Exonucleolytic cleavage in either 5'- to 3'- or 3'- to 5'-direction to yield nucleoside 5'-phosphates.. Its function is as follows. Bidirectionally degrades single-stranded DNA into large acid-insoluble oligonucleotides, which are then degraded further into small acid-soluble oligonucleotides. This chain is Exodeoxyribonuclease 7 large subunit, found in Koribacter versatilis (strain Ellin345).